A 163-amino-acid polypeptide reads, in one-letter code: Nucleotide-binding protein YajQ (163 aa).

Belongs to the YajQ family.

Functionally, nucleotide-binding protein. This chain is Nucleotide-binding protein YajQ, found in Escherichia coli (strain K12 / DH10B).